A 1070-amino-acid polypeptide reads, in one-letter code: DNA-directed RNA polymerase subunit beta (1070 aa).

The protein belongs to the RNA polymerase beta chain family. In terms of assembly, in plastids the minimal PEP RNA polymerase catalytic core is composed of four subunits: alpha, beta, beta', and beta''. When a (nuclear-encoded) sigma factor is associated with the core the holoenzyme is formed, which can initiate transcription.

It localises to the plastid. The protein resides in the chloroplast. It carries out the reaction RNA(n) + a ribonucleoside 5'-triphosphate = RNA(n+1) + diphosphate. Functionally, DNA-dependent RNA polymerase catalyzes the transcription of DNA into RNA using the four ribonucleoside triphosphates as substrates. The sequence is that of DNA-directed RNA polymerase subunit beta from Vitis vinifera (Grape).